Consider the following 805-residue polypeptide: Leucine--tRNA ligase (805 aa).

Positions 39–50 match the 'HIGH' region motif; the sequence is PYPSGKGLHVGH. Positions 583–587 match the 'KMSKS' region motif; that stretch reads KMSKS. K586 lines the ATP pocket.

Belongs to the class-I aminoacyl-tRNA synthetase family.

Its subcellular location is the cytoplasm. It catalyses the reaction tRNA(Leu) + L-leucine + ATP = L-leucyl-tRNA(Leu) + AMP + diphosphate. The chain is Leucine--tRNA ligase from Mycoplasmoides gallisepticum (strain R(low / passage 15 / clone 2)) (Mycoplasma gallisepticum).